The primary structure comprises 350 residues: C5a anaphylatoxin chemotactic receptor 1 (350 aa).

Topologically, residues 1–37 (MDSFNYTTPDYGHYDDKDTLDPNTPVDKTSNTLRVPD) are extracellular. The tract at residues 10–18 (DYGHYDDKD) is required for CHIPS binding. A sulfotyrosine mark is found at Tyr11 and Tyr14. Residues 21–30 (DPNTPVDKTS) are involved in C5a binding. A helical membrane pass occupies residues 38-64 (ILALVIFAVVFLVGVLGNALVVWVTAF). Over 65-69 (EVKRT) the chain is Cytoplasmic. Residues 70–93 (INAIWFLNLAVADFLSCLALPILF) form a helical membrane-spanning segment. Topologically, residues 94–110 (TSIVQHHHWPFGGAACR) are extracellular. An intrachain disulfide couples Cys109 to Cys188. Residues 111-132 (ILPSLILLNMYASILLLATISA) form a helical membrane-spanning segment. The Cytoplasmic portion of the chain corresponds to 133–153 (DRFLLVFKPIWCQNFRGAGLA). A helical membrane pass occupies residues 154 to 174 (WIACAVAWGLALLLTIPSFLY). At 175–200 (RVVREEYFPPKVLCGVDYSHDKQRER) the chain is on the extracellular side. The chain crosses the membrane as a helical span at residues 201 to 226 (AVAVVRLVLGFLWPLLTLTICYTFIL). Topologically, residues 227 to 242 (LRTWSRRATRSTKTLK) are cytoplasmic. Residues 243–265 (VVVAVVASFFIFWLPYQVTGIMM) form a helical membrane-spanning segment. The Extracellular portion of the chain corresponds to 266 to 282 (SFLEPSSPTFLLLKKLD). The chain crosses the membrane as a helical span at residues 283–303 (SLCVSFAYINCCINPIIYVVA). Residues 304 to 350 (GQGFQGRLRKSLPSLLRNVLTEESVVRESKSFTRSTVDTMAEKTQAV) are Cytoplasmic-facing. A phosphoserine mark is found at Ser314, Ser317, Ser327, Ser332, Ser334, and Ser338.

The protein belongs to the G-protein coupled receptor 1 family. In terms of assembly, homodimer. May also form higher-order oligomers. Interacts (when phosphorylated) with ARRB1 and ARRB2; the interaction is associated with internalization of C5aR. Interacts (via N-terminal domain) with S.aureus chemotaxis inhibitory protein (CHIPS); the interaction blocks the receptor and may thus inhibit the immune response. Sulfation plays a critical role in the association of C5aR with C5a, but no significant role in the ability of the receptor to transduce a signal and mobilize calcium in response to a small peptide agonist. Sulfation at Tyr-14 is important for CHIPS binding. Post-translationally, phosphorylated on serine residues in response to C5a binding, resulting in internalization of the receptor and short-term desensitization to C5a.

It is found in the cell membrane. The protein localises to the cytoplasmic vesicle. Receptor for the chemotactic and inflammatory peptide anaphylatoxin C5a. The ligand interacts with at least two sites on the receptor: a high-affinity site on the extracellular N-terminus, and a second site in the transmembrane region which activates downstream signaling events. Receptor activation stimulates chemotaxis, granule enzyme release, intracellular calcium release and superoxide anion production. This chain is C5a anaphylatoxin chemotactic receptor 1 (C5AR1), found in Gorilla gorilla gorilla (Western lowland gorilla).